The following is a 623-amino-acid chain: Pyranose 2-oxidase (623 aa).

Positions 1 to 28 are cleaved as a signal peptide; the sequence is MSTSSSDPFFNFAKSSFRSAAAQKASAS. The propeptide occupies 29–38; sequence SLPPLPGPDK. His-167 carries the tele-8alpha-FAD histidine modification. Gln-448 and His-450 together coordinate substrate. The active-site Proton acceptor is the His-548. Asn-593 is an active-site residue.

Belongs to the GMC oxidoreductase family. In terms of assembly, homotetramer. The cofactor is FAD.

The protein localises to the periplasm. The enzyme catalyses D-glucose + O2 = 2-dehydro-D-glucose + H2O2. Catalyzes the oxidation of various aldopyranoses and disaccharides on carbon-2 to the corresponding 2-keto sugars concomitant with the reduction of O(2) to H(2)O(2). Plays an important role in lignin degradation of wood rot fungi by supplying the essential cosubstrate H(2)O(2) for the ligninolytic peroxidases, lignin peroxidase and manganese-dependent peroxidase. In Peniophora sp. (strain SG) (White-rot fungus), this protein is Pyranose 2-oxidase (p2ox).